We begin with the raw amino-acid sequence, 293 residues long: Glutamyl-Q tRNA(Asp) synthetase (293 aa).

L-glutamate-binding positions include 8–12 (RFAPS) and Glu44. The 'HIGH' region motif lies at 11-21 (PSPSGPLHAGS). Residues Cys98, Cys100, Tyr120, and Cys124 each contribute to the Zn(2+) site. The L-glutamate site is built by Tyr183 and Arg201. The short motif at 239 to 243 (KLSKQ) is the 'KMSKS' region element. Lys242 is an ATP binding site.

The protein belongs to the class-I aminoacyl-tRNA synthetase family. GluQ subfamily. Zn(2+) is required as a cofactor.

Functionally, catalyzes the tRNA-independent activation of glutamate in presence of ATP and the subsequent transfer of glutamate onto a tRNA(Asp). Glutamate is transferred on the 2-amino-5-(4,5-dihydroxy-2-cyclopenten-1-yl) moiety of the queuosine in the wobble position of the QUC anticodon. The polypeptide is Glutamyl-Q tRNA(Asp) synthetase (Janthinobacterium sp. (strain Marseille) (Minibacterium massiliensis)).